A 329-amino-acid polypeptide reads, in one-letter code: ADP-L-glycero-D-manno-heptose-6-epimerase (329 aa).

NADP(+) contacts are provided by residues 10–11, 31–32, Lys-38, Lys-53, 74–78, and Asn-91; these read FI, DD, and QGACS. Catalysis depends on Tyr-138, which acts as the Proton acceptor. Residue Lys-142 coordinates NADP(+). Substrate is bound at residue Asn-167. NADP(+) contacts are provided by Val-168 and Lys-176. Catalysis depends on Lys-176, which acts as the Proton acceptor. Residues Arg-178, His-185, 199 to 202, Arg-212, and Tyr-291 each bind substrate; that span reads FAGW.

Belongs to the NAD(P)-dependent epimerase/dehydratase family. HldD subfamily. As to quaternary structure, homopentamer. It depends on NADP(+) as a cofactor.

It carries out the reaction ADP-D-glycero-beta-D-manno-heptose = ADP-L-glycero-beta-D-manno-heptose. Its pathway is nucleotide-sugar biosynthesis; ADP-L-glycero-beta-D-manno-heptose biosynthesis; ADP-L-glycero-beta-D-manno-heptose from D-glycero-beta-D-manno-heptose 7-phosphate: step 4/4. It functions in the pathway bacterial outer membrane biogenesis; LPS core biosynthesis. Its function is as follows. Catalyzes the interconversion between ADP-D-glycero-beta-D-manno-heptose and ADP-L-glycero-beta-D-manno-heptose via an epimerization at carbon 6 of the heptose. This Bordetella pertussis (strain Tohama I / ATCC BAA-589 / NCTC 13251) protein is ADP-L-glycero-D-manno-heptose-6-epimerase.